We begin with the raw amino-acid sequence, 79 residues long: Large ribosomal subunit protein uL22 (79 aa).

It belongs to the universal ribosomal protein uL22 family. As to quaternary structure, part of the 50S ribosomal subunit.

Functionally, this protein binds specifically to 23S rRNA; its binding is stimulated by other ribosomal proteins, e.g. L4, L17, and L20. It is important during the early stages of 50S assembly. It makes multiple contacts with different domains of the 23S rRNA in the assembled 50S subunit and ribosome. Its function is as follows. The globular domain of the protein is located near the polypeptide exit tunnel on the outside of the subunit, while an extended beta-hairpin is found that lines the wall of the exit tunnel in the center of the 70S ribosome. This is Large ribosomal subunit protein uL22 (rplV) from Prunus armeniaca phytoplasma.